The sequence spans 124 residues: Small ribosomal subunit protein uS12 (124 aa).

3-methylthioaspartic acid is present on Asp89. The interval Asp103–Glu124 is disordered.

It belongs to the universal ribosomal protein uS12 family. As to quaternary structure, part of the 30S ribosomal subunit. Contacts proteins S8 and S17. May interact with IF1 in the 30S initiation complex.

In terms of biological role, with S4 and S5 plays an important role in translational accuracy. Interacts with and stabilizes bases of the 16S rRNA that are involved in tRNA selection in the A site and with the mRNA backbone. Located at the interface of the 30S and 50S subunits, it traverses the body of the 30S subunit contacting proteins on the other side and probably holding the rRNA structure together. The combined cluster of proteins S8, S12 and S17 appears to hold together the shoulder and platform of the 30S subunit. In Prochlorococcus marinus (strain NATL1A), this protein is Small ribosomal subunit protein uS12.